Consider the following 360-residue polypeptide: CLIP domain-containing serine protease B4 (360 aa).

The N-terminal stretch at 1–24 is a signal peptide; the sequence is MIGNRVINLLIVATLALAGQTVLA. A Clip domain is found at 30-83; sequence DCVNPVGEAGKCVLFRECQPLVDIYNKPVNTPDDTQFLTESRCGLYERKTLVCC. 4 disulfides stabilise this stretch: cysteine 31–cysteine 82, cysteine 41–cysteine 72, cysteine 47–cysteine 83, and cysteine 138–cysteine 154. One can recognise a Peptidase S1 domain in the interval 108 to 360; the sequence is VIGGQPTKID…YVDWIKDNIY (253 aa). Residues histidine 153 and aspartate 213 each act as charge relay system in the active site. Asparagine 224 carries N-linked (GlcNAc...) asparagine glycosylation. Disulfide bonds link cysteine 280/cysteine 297 and cysteine 307/cysteine 336. The Charge relay system role is filled by serine 311.

Belongs to the peptidase S1 family. CLIP subfamily. In terms of assembly, interacts with SRPN2 in the hemolymph of immune-challenged female mosquitoes; the interaction results in CLIPB4 inhibition. In females, expressed in fat body, cuticle, thorax and ovaries.

It is found in the secreted. Its function is as follows. Serine protease which plays a role in the innate immune response against protozoan and bacterial pathogens, such as Plasmodium bergei, Staphylococcus aureus, Micrococcus luteus and Escherichia coli, by activating the melanization cascade. Cleaves and activates CLIPB8. In the resistant strain L3-5, involved in the melanization of killed parasite P.berghei ookinetes which results in their clearance. In the susceptible strain G3, appears to be dispensable for ookinete elimination which occurs by lysis. The protein is CLIP domain-containing serine protease B4 of Anopheles gambiae (African malaria mosquito).